Here is a 214-residue protein sequence, read N- to C-terminus: Leucyl/phenylalanyl-tRNA--protein transferase (214 aa).

This sequence belongs to the L/F-transferase family.

It localises to the cytoplasm. It carries out the reaction N-terminal L-lysyl-[protein] + L-leucyl-tRNA(Leu) = N-terminal L-leucyl-L-lysyl-[protein] + tRNA(Leu) + H(+). The enzyme catalyses N-terminal L-arginyl-[protein] + L-leucyl-tRNA(Leu) = N-terminal L-leucyl-L-arginyl-[protein] + tRNA(Leu) + H(+). It catalyses the reaction L-phenylalanyl-tRNA(Phe) + an N-terminal L-alpha-aminoacyl-[protein] = an N-terminal L-phenylalanyl-L-alpha-aminoacyl-[protein] + tRNA(Phe). In terms of biological role, functions in the N-end rule pathway of protein degradation where it conjugates Leu, Phe and, less efficiently, Met from aminoacyl-tRNAs to the N-termini of proteins containing an N-terminal arginine or lysine. In Cereibacter sphaeroides (strain KD131 / KCTC 12085) (Rhodobacter sphaeroides), this protein is Leucyl/phenylalanyl-tRNA--protein transferase.